The sequence spans 1192 residues: Leucine-rich repeat receptor protein kinase EMS1 (1192 aa).

The N-terminal stretch at 1-18 is a signal peptide; sequence MAFLTALFLFLFFSFSSS. A glycan (N-linked (GlcNAc...) asparagine) is linked at N47. LRR repeat units follow at residues 64 to 87, 90 to 112, 114 to 137, 138 to 160, 163 to 185, 187 to 209, 235 to 257, 259 to 281, 283 to 304, 330 to 352, 354 to 376, 378 to 400, 402 to 425, 426 to 447, 449 to 471, 473 to 496, 497 to 520, 521 to 543, 545 to 567, 581 to 603, 605 to 628, 629 to 651, 653 to 675, 677 to 697, 701 to 723, 725 to 748, 749 to 772, and 773 to 795; these read LGRV…EISS, NLRE…IWNL, HLQT…SELP, QLLY…FFIS, ALSS…IGKL, NLSN…IGNI, HLAK…FGEL, NLSI…LGNC, SLKS…ELSE, VLDS…IEDC, MLKH…LCGS, SLEA…FDGC, SLGE…WKLP, LMAL…LWKS, NLME…IGNA, SLKR…GKLT, SLSV…GDCT, SLTT…ITAL, QLQC…PSAY, HHGI…LGEC, VLVE…SRLT, NLTI…MGNS, KLQG…FGLL, SLVK…ASLG, ELTH…LSTM, KLVG…GNLT, QLEY…CGLP, and NLEF…GVCQ. N171, N187, and N208 each carry an N-linked (GlcNAc...) asparagine glycan. N-linked (GlcNAc...) asparagine glycosylation is present at N259. N414 and N435 each carry an N-linked (GlcNAc...) asparagine glycan. An N-linked (GlcNAc...) asparagine glycan is attached at N555. N629 carries an N-linked (GlcNAc...) asparagine glycan. Residues N682, N711, and N746 are each glycosylated (N-linked (GlcNAc...) asparagine). A helical membrane pass occupies residues 828–848; it reads WGIAGLMLGFTIIVFVFVFSL. At T914 the chain carries Phosphothreonine. A Protein kinase domain is found at 917-1192; the sequence is FSKKNIIGDG…LDVLKALKEI (276 aa). Residues 923–931 and K945 contribute to the ATP site; that span reads IGDGGFGTV. Y990 is modified (phosphotyrosine). D1043 acts as the Proton acceptor in catalysis. The residue at position 1085 (Y1085) is a Phosphotyrosine.

This sequence belongs to the protein kinase superfamily. Ser/Thr protein kinase family. As to quaternary structure, interacts with TPD1. In terms of processing, autophosphorylates in vitro. In terms of tissue distribution, present in young buds, open flowers and siliques but absent from mature leaves and roots. Strongly expressed in the young organ primordia, and as the anthers and ovules developed, became focused in the microsporangia and in the distal and chalazal regions of the ovule. In cv. Landsberg erecta, only expressed in the anthers of young floral buds.

It localises to the cell membrane. The catalysed reaction is L-seryl-[protein] + ATP = O-phospho-L-seryl-[protein] + ADP + H(+). It carries out the reaction L-threonyl-[protein] + ATP = O-phospho-L-threonyl-[protein] + ADP + H(+). Receptor with a serine/threonine-protein kinase activity required for the specification of the correct number of male archesporial initials and for the subsequent specification of tapetal and middle cell layer identities. In seeds, required for enhancing cell size and the rate of embryonic development. This chain is Leucine-rich repeat receptor protein kinase EMS1, found in Arabidopsis thaliana (Mouse-ear cress).